The sequence spans 266 residues: Glutamate racemase (266 aa).

Residues 9–10 and 41–42 each bind substrate; these read DS and YG. Catalysis depends on Cys-72, which acts as the Proton donor/acceptor. 73 to 74 is a substrate binding site; it reads NT. Cys-184 (proton donor/acceptor) is an active-site residue. 185–186 contributes to the substrate binding site; the sequence is TH.

Belongs to the aspartate/glutamate racemases family.

It catalyses the reaction L-glutamate = D-glutamate. It participates in cell wall biogenesis; peptidoglycan biosynthesis. Provides the (R)-glutamate required for cell wall biosynthesis. The protein is Glutamate racemase of Staphylococcus aureus (strain Mu3 / ATCC 700698).